Here is a 331-residue protein sequence, read N- to C-terminus: Osmotic avoidance abnormal protein 8 (331 aa).

The N-terminal stretch at methionine 1 to cysteine 21 is a signal peptide.

As to expression, expressed in the hypodermal syncitium but not in hypodermal seam cells.

It is found in the secreted. Functionally, negative regulator of the osmotic stress response. Acts via the transmembrane protein ptr-23. This is Osmotic avoidance abnormal protein 8 (osm-8) from Caenorhabditis elegans.